The primary structure comprises 362 residues: 3-isopropylmalate dehydrogenase (362 aa).

75 to 88 (GPKWANLPPTEQPE) lines the NAD(+) pocket. R96, R106, R135, and D224 together coordinate substrate. Positions 224, 248, and 252 each coordinate Mg(2+). Residue 282 to 294 (GSAPDIAGLGVAN) participates in NAD(+) binding.

It belongs to the isocitrate and isopropylmalate dehydrogenases family. LeuB type 1 subfamily. As to quaternary structure, homodimer. It depends on Mg(2+) as a cofactor. The cofactor is Mn(2+).

Its subcellular location is the cytoplasm. It carries out the reaction (2R,3S)-3-isopropylmalate + NAD(+) = 4-methyl-2-oxopentanoate + CO2 + NADH. It functions in the pathway amino-acid biosynthesis; L-leucine biosynthesis; L-leucine from 3-methyl-2-oxobutanoate: step 3/4. Catalyzes the oxidation of 3-carboxy-2-hydroxy-4-methylpentanoate (3-isopropylmalate) to 3-carboxy-4-methyl-2-oxopentanoate. The product decarboxylates to 4-methyl-2 oxopentanoate. In Colwellia psychrerythraea (strain 34H / ATCC BAA-681) (Vibrio psychroerythus), this protein is 3-isopropylmalate dehydrogenase.